The sequence spans 271 residues: Proteasome inhibitor PI31 subunit (271 aa).

N-acetylalanine is present on Ala2. Residues 2-150 form an important for homodimerization and interaction with FBXO7 region; the sequence is AGLEVLFASA…PIHEQWEKAN (149 aa). At Ser153 the chain carries Phosphoserine. Arg205 is subject to Omega-N-methylarginine. Residue Arg219 is modified to Asymmetric dimethylarginine. The disordered stretch occupies residues 222–271; sequence IDPSSGLPNRLPPGAVPPGARFDPFGPIGTSPPGPNPDHLPPPGYDDMYL. Arg231 is modified (omega-N-methylarginine). The span at 251–265 shows a compositional bias: pro residues; it reads TSPPGPNPDHLPPPG. Position 252 is a phosphoserine (Ser252).

It belongs to the proteasome inhibitor PI31 family. As to quaternary structure, monomer and homodimer. Interacts with FBXO7. Interacts with the 20S proteasome.

It is found in the cytoplasm. It localises to the endoplasmic reticulum. Its function is as follows. Plays an important role in control of proteasome function. Inhibits the hydrolysis of protein and peptide substrates by the 20S proteasome. Also inhibits the activation of the proteasome by the proteasome regulatory proteins PA700 and PA28. This is Proteasome inhibitor PI31 subunit (PSMF1) from Homo sapiens (Human).